A 177-amino-acid chain; its full sequence is RNA silencing suppressor (177 aa).

In terms of assembly, homooctamer. The eight monomers assemble into a closed ring that binds RNA.

Its subcellular location is the host cytoplasm. Its function is as follows. Acts as a suppressor of RNA-mediated gene silencing, also known as post-transcriptional gene silencing (PTGS), a mechanism of plant viral defense that limits the accumulation of viral RNAs. Binds to ssRNAs and dsRNAs in vitro. Also functions as a replication enhancer. The protein is RNA silencing suppressor of Beta vulgaris (Sugar beet).